The sequence spans 291 residues: Transmembrane protein 41B (291 aa).

Over residues 1–11 (MAKGRVADRSP) the composition is skewed to basic and acidic residues. The segment at 1-43 (MAKGRVADRSPTEMLHSTPAGDRAVRTQGSAAPGSKDHLNEKP) is disordered. The residue at position 18 (T18) is a Phosphothreonine. The residue at position 35 (S35) is a Phosphoserine. Transmembrane regions (helical) follow at residues 52–72 (TSLLILVSIFSCAAFVMFLVY), 109–129 (FYVQVLVAYFATYIFLQTFAI), 147–169 (LALFLVCLCSGLGASFCYMLSYL), 197–217 (LINYIIFLRITPFLPNWFINI), 225–245 (PLKVFFIGTFLGVAPPSFVAI), and 262–282 (SWSSVFILMVLALLSILPAIF). The VTT domain; required for its function in autophagy stretch occupies residues 140-251 (GFLYPFPLAL…FVAIKAGTTL (112 aa)).

Belongs to the TMEM41 family. Interacts with VMP1. Interacts with COPA, COPB1, VDAC1 and ERLIN2. Interacts with ATG2A. Interacts with SURF4. As to expression, expressed in brain, spinal cord, kidney and first lumbar dorsal root ganglia during postnatal development. Expressed in motor neurons and proprioceptive neurons.

Its subcellular location is the endoplasmic reticulum membrane. It is found in the endomembrane system. It catalyses the reaction a 1,2-diacyl-sn-glycero-3-phospho-L-serine(in) = a 1,2-diacyl-sn-glycero-3-phospho-L-serine(out). The catalysed reaction is cholesterol(in) = cholesterol(out). It carries out the reaction a 1,2-diacyl-sn-glycero-3-phosphocholine(in) = a 1,2-diacyl-sn-glycero-3-phosphocholine(out). The enzyme catalyses a 1,2-diacyl-sn-glycero-3-phosphoethanolamine(in) = a 1,2-diacyl-sn-glycero-3-phosphoethanolamine(out). Phospholipid scramblase involved in lipid homeostasis and membrane dynamics processes. Has phospholipid scramblase activity toward cholesterol and phosphatidylserine, as well as phosphatidylethanolamine and phosphatidylcholine. Required for autophagosome formation: participates in early stages of autophagosome biogenesis at the endoplasmic reticulum (ER) membrane by reequilibrating the leaflets of the ER as lipids are extracted by ATG2 (ATG2A or ATG2B) to mediate autophagosome assembly. In addition to autophagy, involved in other processes in which phospholipid scramblase activity is required. Required for normal motor neuron development. The polypeptide is Transmembrane protein 41B (Mus musculus (Mouse)).